A 1896-amino-acid chain; its full sequence is Plexin-A1 (1896 aa).

The signal sequence occupies residues 1–26 (MPLPPRSLQVLLLLLLLLLLLPGMWA). In terms of domain architecture, Sema spans 27 to 512 (EAGLPRAGGG…TEKQVTRVPV (486 aa)). Residues 27–1244 (EAGLPRAGGG…VYSDSLLTLP (1218 aa)) lie on the Extracellular side of the membrane. A glycan (N-linked (GlcNAc...) asparagine) is linked at N77. Cystine bridges form between C95-C104, C130-C138, C286-C407, C302-C358, C376-C395, C515-C532, C521-C563, C524-C541, C535-C547, and C598-C617. 3 N-linked (GlcNAc...) asparagine glycosylation sites follow: N660, N672, and N701. IPT/TIG domains are found at residues 864–959 (PKIL…FTFV), 961–1045 (PTFY…YNYT), 1048–1147 (PTIL…FLYY), and 1150–1236 (PVLE…LQVY). N-linked (GlcNAc...) asparagine glycosylation is present at N1043. Residues N1187 and N1212 are each glycosylated (N-linked (GlcNAc...) asparagine). The chain crosses the membrane as a helical span at residues 1245–1265 (AIVGIGGGGGLLLLVIVAVLI). The stretch at 1264-1317 (LIAYKRKSRDADRTLKRLQLQMDNLESRVALECKEAFAELQTDIHELTNDLDGA) forms a coiled coil. At 1266–1896 (AYKRKSRDAD…QVVDTMALSS (631 aa)) the chain is on the cytoplasmic side.

Belongs to the plexin family. As to quaternary structure, interacts directly with NRP1 and NRP2. Interacts with PLXN1B. Interacts with FARP2, RND1 and KDR/VEGFR2. Binding of SEMA3A leads to dissociation of FARP2. Interacts with CRMP1, DPYSL2/CRMP2, DPYSL3/CRMP3 and DPYSL4/CRMP4. Interacts (via TIG domains) with TREM2; the interaction mediates SEMA6D binding and signaling through TYROBP. Detected in fetal brain, lung, liver and kidney.

It is found in the cell membrane. In terms of biological role, coreceptor for SEMA3A, SEMA3C, SEMA3F and SEMA6D. Necessary for signaling by class 3 semaphorins and subsequent remodeling of the cytoskeleton. Plays a role in axon guidance, invasive growth and cell migration. Class 3 semaphorins bind to a complex composed of a neuropilin and a plexin. The plexin modulates the affinity of the complex for specific semaphorins, and its cytoplasmic domain is required for the activation of down-stream signaling events in the cytoplasm. Acts as coreceptor of TREM2 for SEMA6D in dendritic cells and is involved in the generation of immune responses and skeletal homeostasis. The chain is Plexin-A1 from Homo sapiens (Human).